Consider the following 664-residue polypeptide: Glycine--tRNA ligase beta subunit (664 aa).

It belongs to the class-II aminoacyl-tRNA synthetase family. In terms of assembly, tetramer of two alpha and two beta subunits.

Its subcellular location is the cytoplasm. It catalyses the reaction tRNA(Gly) + glycine + ATP = glycyl-tRNA(Gly) + AMP + diphosphate. This is Glycine--tRNA ligase beta subunit from Rickettsia africae (strain ESF-5).